A 61-amino-acid polypeptide reads, in one-letter code: uncharacterized protein (61 aa).

A coiled-coil region spans residues 34–61 (TDVEDIDRLISMLDDLEAKYERFKKDWE).

This is an uncharacterized protein from Bacillus subtilis (strain 168).